We begin with the raw amino-acid sequence, 2059 residues long: Non-reducing polyketide synthase stmB (2059 aa).

Positions Leu7–His243 constitute a Starter acyltransferase (SAT) domain. In terms of domain architecture, Ketosynthase family 3 (KS3) spans Ser366–Glu796. Active-site for beta-ketoacyl synthase activity residues include Cys538, His673, and His713. The Malonyl-CoA:ACP transacylase (MAT) domain occupies Trp895–Gly1185. Residues Leu1273–Ser1413 form an N-terminal hotdog fold region. The region spanning Leu1273–His1581 is the PKS/mFAS DH domain. The active-site Proton acceptor; for dehydratase activity is the His1306. Residues Gly1435–His1581 are C-terminal hotdog fold. Asp1495 functions as the Proton donor; for dehydratase activity in the catalytic mechanism. Residues Pro1619–Glu1696 enclose the Carrier domain. Ser1656 carries the post-translational modification O-(pantetheine 4'-phosphoryl)serine. Residues Gly1693–Glu1727 are disordered. The span at Thr1697 to Ala1709 shows a compositional bias: acidic residues. Residues Pro1710–Ser1719 show a composition bias toward low complexity. The interval Ala1778–Ala2059 is thioesterase (TE) domain.

It depends on pantetheine 4'-phosphate as a cofactor.

The protein operates within mycotoxin biosynthesis. Functionally, non-reducing polyketide synthase; part of the gene cluster that mediates the biosynthesis of stromemycin, a depside C-glucoside with two unsaturated C9 side chains belonging to aromatic polyketide glycosides. The HR-PKS stmA and the NR-PKS stmB act as scaffold-generating enzymes responsible for the biosynthesis of the polyketide skeleton bininalkenylresorcylic acid. StmA condenses on acetyl-CoA starter unit with 4 malonyl-CoA units and the stmB uses 3 more malonyl-CoA units and catalyzes the depside bond formation. The glycoytransferase stmC then acts as the tailoring enzyme responsible for 3-C-glucosylation of bininalkenylresorcylic acid to yield stromemycin. In Aspergillus ustus, this protein is Non-reducing polyketide synthase stmB.